The primary structure comprises 363 residues: DNA replication and repair protein RecF (363 aa).

30–37 (GDNAQGKT) contributes to the ATP binding site.

Belongs to the RecF family.

Its subcellular location is the cytoplasm. The RecF protein is involved in DNA metabolism; it is required for DNA replication and normal SOS inducibility. RecF binds preferentially to single-stranded, linear DNA. It also seems to bind ATP. The protein is DNA replication and repair protein RecF of Syntrophotalea carbinolica (strain DSM 2380 / NBRC 103641 / GraBd1) (Pelobacter carbinolicus).